The following is a 362-amino-acid chain: Transcription factor Sox-7 (362 aa).

The segment at 21 to 41 (EDLSDGLSPHRSPREKGSETR) is disordered. A compositionally biased stretch (basic and acidic residues) spans 32–41 (SPREKGSETR). The segment at residues 42–110 (IRRPMNAFMV…QHMQDYPNYK (69 aa)) is a DNA-binding region (HMG box). The Sox C-terminal domain maps to 245–362 (QTGSSMIPPV…ATYYNSYSVS (118 aa)).

In terms of tissue distribution, expressed in the embryonic pronephric sinus as well as posterior cardinal veins.

It localises to the nucleus. Functionally, transcription factor. Binds to the DNA sequence 5'-AACAAT-3'. Acts downstream of vegt and upstream of nodal signaling to promote endodermal and mesodermal differentiation by promoting vegt-induced expression of both endodermal genes (including endodermin) and mesodermal genes (including snai1/snail and snai2/slug). Induces expression of multiple nodal genes (including nodal, nodal2, nodal4, nodal5 and nodal6) and binds directly to sites within the promoter of the nodal5 gene. The endodermal and mesodermal specification pathways then interact to initiate cardiogenesis. Acts partially redundantly with sox18 during cardiogenesis. Also acts as an antagonist of beta-catenin signaling. Regulates (possibly indirectly) development of the pronephros, the functional larval kidney. The sequence is that of Transcription factor Sox-7 from Xenopus tropicalis (Western clawed frog).